Consider the following 132-residue polypeptide: Small ribosomal subunit protein uS8 (132 aa).

It belongs to the universal ribosomal protein uS8 family. As to quaternary structure, part of the 30S ribosomal subunit. Contacts proteins S5 and S12.

Its function is as follows. One of the primary rRNA binding proteins, it binds directly to 16S rRNA central domain where it helps coordinate assembly of the platform of the 30S subunit. This is Small ribosomal subunit protein uS8 from Listeria innocua serovar 6a (strain ATCC BAA-680 / CLIP 11262).